Consider the following 176-residue polypeptide: Peptide deformylase (176 aa).

Positions 97 and 139 each coordinate Fe cation. E140 is a catalytic residue. Fe cation is bound at residue H143.

It belongs to the polypeptide deformylase family. It depends on Fe(2+) as a cofactor.

It carries out the reaction N-terminal N-formyl-L-methionyl-[peptide] + H2O = N-terminal L-methionyl-[peptide] + formate. In terms of biological role, removes the formyl group from the N-terminal Met of newly synthesized proteins. Requires at least a dipeptide for an efficient rate of reaction. N-terminal L-methionine is a prerequisite for activity but the enzyme has broad specificity at other positions. The sequence is that of Peptide deformylase from Thermomicrobium roseum (strain ATCC 27502 / DSM 5159 / P-2).